Here is a 93-residue protein sequence, read N- to C-terminus: Em protein H2 (93 aa).

Positions Met-1–Ser-93 are disordered. 3 stretches are compositionally biased toward basic and acidic residues: residues Ser-9–Glu-19, Leu-31–Met-52, and Gly-73–Ser-93.

This sequence belongs to the small hydrophilic plant seed protein family.

Functionally, it is thought to provide protection for the cytoplasm during the desiccation stage of embryo development. In Triticum aestivum (Wheat), this protein is Em protein H2 (EMH2).